A 490-amino-acid chain; its full sequence is tRNA-2-methylthio-N(6)-dimethylallyladenosine synthase (490 aa).

Positions 37-154 (KKVYIATQGC…LPELYDKSTT (118 aa)) constitute an MTTase N-terminal domain. Residues Cys46, Cys83, Cys117, Cys198, Cys202, and Cys205 each coordinate [4Fe-4S] cluster. The Radical SAM core domain occupies 184-416 (KVEGYRAFVS…QKVIRDSTLK (233 aa)). The 69-residue stretch at 419-487 (EEMVGKTLRV…PHMVRGELVD (69 aa)) folds into the TRAM domain.

Belongs to the methylthiotransferase family. MiaB subfamily. As to quaternary structure, monomer. [4Fe-4S] cluster is required as a cofactor.

Its subcellular location is the cytoplasm. The catalysed reaction is N(6)-dimethylallyladenosine(37) in tRNA + (sulfur carrier)-SH + AH2 + 2 S-adenosyl-L-methionine = 2-methylsulfanyl-N(6)-dimethylallyladenosine(37) in tRNA + (sulfur carrier)-H + 5'-deoxyadenosine + L-methionine + A + S-adenosyl-L-homocysteine + 2 H(+). Functionally, catalyzes the methylthiolation of N6-(dimethylallyl)adenosine (i(6)A), leading to the formation of 2-methylthio-N6-(dimethylallyl)adenosine (ms(2)i(6)A) at position 37 in tRNAs that read codons beginning with uridine. The protein is tRNA-2-methylthio-N(6)-dimethylallyladenosine synthase of Psychrobacter sp. (strain PRwf-1).